The chain runs to 851 residues: B-box type zinc finger protein ncl-1 (851 aa).

A disordered region spans residues 71-91 (GFGFGSPSSTTSSSPPLSNSP). Low complexity predominate over residues 76 to 91 (SPSSTTSSSPPLSNSP). A B box-type 1; atypical zinc finger spans residues 127–174 (VPAVHCSGCKSNETATSFCQDCNANLCDNCTMAHKFMHCFADHRVVSL). Positions 132, 135, 156, and 160 each coordinate Zn(2+). Residues 176–197 (TPGTGSSSSSTSSSSSASSTSS) are compositionally biased toward low complexity. Residues 176-211 (TPGTGSSSSSTSSSSSASSTSSHQVPSLGGKQSPDS) form a disordered region. A B box-type 2 zinc finger spans residues 218 to 261 (KRSVLCLQHRASELVFFCVSCNLAICRDCTVSDHPSGTHQYELI). Residues Cys-223, His-226, Cys-246, and His-251 each coordinate Zn(2+). A coiled-coil region spans residues 303 to 331 (SLHNAHAQLEETVSNLINVIQDQKKTLAK). 5 NHL repeats span residues 573 to 616 (HCKF…FDKE), 620 to 665 (KFQF…YNQY), 666 to 707 (GQFL…FDMF), 708 to 750 (GNIL…FSYE), and 751 to 794 (GQYL…FSQD).

In terms of tissue distribution, present in cells in which nucleoli are absent, and absent from large cells in which nucleoli are prominent. Highly expressed in the gonads.

The protein resides in the cytoplasm. Translational repressor that inhibits protein synthesis. Represses the translation of mRNAs such as fib-1, probably by being recruited by RNA-binding protein nos-2 and the Pumilio proteins puf-5, puf-8 and puf-9 to the consensus core PUF binding motif in the 3'-UTR of fib-1 mRNA. Negatively regulates ribosomal RNA (rRNA) synthesis, ribosomal protein synthesis and nucleolus size. Its role in the negative regulation of nucleolus size is most likely through its negative regulation of the translation of proteins such as the rRNA 2'-O-methyltransferase fib-1, and dao-5. Might act directly as a transcription factor to inhibit RNA polymerase I (rRNA) and III (5S RNA) transcription. Plays a role in embryonic development, and in particular, is involved in regulating the localization of proteins, such as par-2, that are required for embryonic cell polarity. Plays a role in the regulation of lifespan, and the response to nutrient availability. The protein is B-box type zinc finger protein ncl-1 of Caenorhabditis elegans.